We begin with the raw amino-acid sequence, 291 residues long: GCN5-related N-acetyltransferase 4, chloroplastic (291 aa).

The transit peptide at 1-61 (MRSTPLGTTA…PSQINSGACN (61 aa)) directs the protein to the chloroplast. Residues 76–280 (IVVREARLED…RFTFMMKLVN (205 aa)) form the N-acetyltransferase domain. Acetyl-CoA contacts are provided by residues 199–201 (VAV) and 207–212 (RKGIAK). Lys217 is modified (N6-acetyllysine). Acetyl-CoA-binding positions include 238–240 (NLG) and Tyr245. Tyr245 (proton donor) is an active-site residue. Residues Lys254 and Lys265 each carry the N6-acetyllysine modification.

The protein belongs to the acetyltransferase family. GNAT subfamily. As to quaternary structure, oligomer. Autoacetylated at K-217, K-254 and K-265. Expressed in green tissues.

It is found in the plastid. The protein resides in the chloroplast. It carries out the reaction an N-terminal L-alpha-aminoacyl-[protein] + acetyl-CoA = N-terminal N(alpha)-acetyl-L-alpha-aminoacyl-[protein] + CoA + H(+). The enzyme catalyses L-lysyl-[protein] + acetyl-CoA = N(6)-acetyl-L-lysyl-[protein] + CoA + H(+). It catalyses the reaction N-terminal L-alanyl-[protein] + acetyl-CoA = N-terminal N(alpha)-acetyl-L-alanyl-[protein] + CoA + H(+). The catalysed reaction is N-terminal L-seryl-[protein] + acetyl-CoA = N-terminal N(alpha)-acetyl-L-seryl-[protein] + CoA + H(+). It carries out the reaction N-terminal L-threonyl-[protein] + acetyl-CoA = N-terminal N(alpha)-acetyl-L-threonyl-[protein] + CoA + H(+). The enzyme catalyses N-terminal L-methionyl-[protein] + acetyl-CoA = N-terminal N(alpha)-acetyl-L-methionyl-[protein] + CoA + H(+). It catalyses the reaction N-terminal L-valyl-[protein] + acetyl-CoA = N-terminal N(alpha)-acetyl-L-valyl-[protein] + CoA + H(+). The catalysed reaction is N-terminal glycyl-[protein] + acetyl-CoA = N-terminal N(alpha)-acetylglycyl-[protein] + CoA + H(+). Its function is as follows. Protein acetyltransferase with dual specificity triggering both N-alpha-acetylation (NTA), with a large spectrum of modified N-termini, including methionine, alanine, serine, threonine and to a lower extent glycine and valine as substrates, and epsilon-lysine acetylation (KA) of several plastid proteins. This chain is GCN5-related N-acetyltransferase 4, chloroplastic, found in Arabidopsis thaliana (Mouse-ear cress).